Consider the following 252-residue polypeptide: Enolase-phosphatase E1 (252 aa).

Mg(2+) is bound by residues aspartate 18 and glutamate 20. Residues 149-150 (SS) and lysine 184 each bind substrate. Position 209 (aspartate 209) interacts with Mg(2+).

This sequence belongs to the HAD-like hydrolase superfamily. MasA/MtnC family. Monomer. Mg(2+) serves as cofactor.

It is found in the cytoplasm. It localises to the nucleus. It carries out the reaction 5-methylsulfanyl-2,3-dioxopentyl phosphate + H2O = 1,2-dihydroxy-5-(methylsulfanyl)pent-1-en-3-one + phosphate. The protein operates within amino-acid biosynthesis; L-methionine biosynthesis via salvage pathway; L-methionine from S-methyl-5-thio-alpha-D-ribose 1-phosphate: step 3/6. Its pathway is amino-acid biosynthesis; L-methionine biosynthesis via salvage pathway; L-methionine from S-methyl-5-thio-alpha-D-ribose 1-phosphate: step 4/6. In terms of biological role, bifunctional enzyme that catalyzes the enolization of 2,3-diketo-5-methylthiopentyl-1-phosphate (DK-MTP-1-P) into the intermediate 2-hydroxy-3-keto-5-methylthiopentenyl-1-phosphate (HK-MTPenyl-1-P), which is then dephosphorylated to form the acireductone 1,2-dihydroxy-3-keto-5-methylthiopentene (DHK-MTPene). The protein is Enolase-phosphatase E1 of Naegleria gruberi (Amoeba).